The sequence spans 379 residues: Cell division protein FtsZ (379 aa).

GTP is bound by residues 18-22 (GGGVN), 105-107 (GTG), E136, R140, and D184.

It belongs to the FtsZ family. As to quaternary structure, homodimer. Polymerizes to form a dynamic ring structure in a strictly GTP-dependent manner. Interacts directly with several other division proteins.

It is found in the cytoplasm. Its function is as follows. Essential cell division protein that forms a contractile ring structure (Z ring) at the future cell division site. The regulation of the ring assembly controls the timing and the location of cell division. One of the functions of the FtsZ ring is to recruit other cell division proteins to the septum to produce a new cell wall between the dividing cells. Binds GTP and shows GTPase activity. The polypeptide is Cell division protein FtsZ (Mycobacterium leprae (strain TN)).